The primary structure comprises 333 residues: MELIVKEESKTDYNYGSDPYKRDIKTLLNTGLVVIDKPSGPTSHEVAAWVRNMLNLVKAGHGGTLDPKVTGALPVALGNTTKCVPIWHIPPKEYVCLMHLHDDAKLEDIENIFKEFTGRIHQRPPLKAAVKRSLRIRKIYEIEILEIDGRDILFRTKCQSGTYLRKLVDDMGEALGTSAHMQELRRTISGPFYENEAVYLQDLLDAYISWKEDGNEEELRKLVKPLEYGLQHLKKIIVKDSAVDAVCHGATLYSSGVSKIEKGIGTDEVVLIETLKGEAVAVGKPLMNTKDMLKTEEGEVVEITRVIMEPGIYPRIWKKRNKNDKSKPESKKN.

Asp-66 functions as the Nucleophile in the catalytic mechanism. Residues Leu-233 to Met-308 form the PUA domain.

The protein belongs to the pseudouridine synthase TruB family. Type 2 subfamily.

It carries out the reaction uridine(55) in tRNA = pseudouridine(55) in tRNA. Could be responsible for synthesis of pseudouridine from uracil-55 in the psi GC loop of transfer RNAs. The protein is Probable tRNA pseudouridine synthase B of Methanococcus maripaludis (strain C6 / ATCC BAA-1332).